The primary structure comprises 821 residues: MVSWGRFICLVLVTMATLSLARPSFSLVEDTTLEPEEPPTKYQISQPEAYVVAPGESLELQCMLKDAAVISWTKDGVHLGPNNRTVLIGEYLQIKGATPRDSGLYACTAARTVDSETWIFMVNVTDAISSGDDEDDTDSSEDVVSENRSNQRAPYWTNTEKMEKRLHACPAANTVKFRCPAGGNPTSTMRWLKNGKEFKQEHRIGGYKVRNQHWSLIMESVVPSDKGNYTCLVENEYGSINHTYHLDVVERSPHRPILQAGLPANASTVVGGDVEFVCKVYSDAQPHIQWIKHVEKNGSKNGPDGLPYLKVLKAAGVNTTDKEIEVLYIRNVTFEDAGEYTCLAGNSIGISFHSAWLTVLPAPVREKEITASPDYLEIAIYCIGVFLIACMVVTVIFCRMKTTTKKPDFSSQPAVHKLTKRIPLRRQVTVSAESSSSMNSNTPLVRITTRLSSTADTPMLAGVSEYELPEDPKWEFPRDKLTLGKPLGEGCFGQVVMAEAVGIDKDKPKEAVTVAVKMLKDDATEKDLSDLVSEMEMMKMIGKHKNIINLLGACTQDGPLYVIVEYASKGNLREYLRARRPPGMEYSYDINRVPEEQMTFKDLVSCTYQLARGMEYLASQKCIHRDLAARNVLVTENNVMKIADFGLARDINNIDYYKKTTNGRLPVKWMAPEALFDRVYTHQSDVWSFGVLMWEIFTLGGSPYPGIPVEELFKLLKEGHRMDKPTNCTNELYMMMRDCWHAVPSQRPTFKQLVEDLDRILTLTTNEEYLDLTQPLEQYSPSYPDTSSSCSSGDDSVFSPDPMPYEPCLPQYPHINGSVKT.

The first 21 residues, 1–21 (MVSWGRFICLVLVTMATLSLA), serve as a signal peptide directing secretion. Over 22-377 (RPSFSLVEDT…EITASPDYLE (356 aa)) the chain is Extracellular. An Ig-like C2-type 1 domain is found at 25–125 (FSLVEDTTLE…ETWIFMVNVT (101 aa)). Cysteines 62 and 107 form a disulfide. N-linked (GlcNAc...) asparagine glycosylation is found at asparagine 83 and asparagine 123. The tract at residues 129–151 (SSGDDEDDTDSSEDVVSENRSNQ) is disordered. The segment covering 131–144 (GDDEDDTDSSEDVV) has biased composition (acidic residues). Asparagine 147 carries N-linked (GlcNAc...) asparagine glycosylation. Ig-like C2-type domains are found at residues 154–247 (PYWT…YHLD) and 256–358 (PILQ…AWLT). A heparin-binding region spans residues 161–178 (KMEKRLHACPAANTVKFR). Cysteine 179 and cysteine 231 are joined by a disulfide. 6 N-linked (GlcNAc...) asparagine glycosylation sites follow: asparagine 228, asparagine 241, asparagine 265, asparagine 297, asparagine 318, and asparagine 331. A disulfide bond links cysteine 278 and cysteine 342. Residues 378–398 (IAIYCIGVFLIACMVVTVIFC) traverse the membrane as a helical segment. Residues 399–821 (RMKTTTKKPD…YPHINGSVKT (423 aa)) lie on the Cytoplasmic side of the membrane. A Phosphotyrosine; by autocatalysis modification is found at tyrosine 466. A Protein kinase domain is found at 481–770 (LTLGKPLGEG…LTLTTNEEYL (290 aa)). Residues 487-495 (LGEGCFGQV), lysine 517, 565-567 (EYA), and asparagine 571 contribute to the ATP site. Tyrosine 586 and tyrosine 588 each carry phosphotyrosine; by autocatalysis. Aspartate 626 functions as the Proton acceptor in the catalytic mechanism. Residues tyrosine 656, tyrosine 657, and tyrosine 769 each carry the phosphotyrosine; by autocatalysis modification. Position 780 is a phosphoserine (serine 780).

Belongs to the protein kinase superfamily. Tyr protein kinase family. Fibroblast growth factor receptor subfamily. As to quaternary structure, monomer. Homodimer after ligand binding. Interacts predominantly with FGF1 and FGF2, but can also interact with FGF3, FGF4, FGF6, FGF7, FGF8, FGF9, FGF10, FGF17, FGF18 and FGF22 (in vitro). Ligand specificity is determined by tissue-specific expression of isoforms, and differences in the third Ig-like domain are crucial for ligand specificity. Affinity for fibroblast growth factors (FGFs) is increased by heparan sulfate glycosaminoglycans that function as coreceptors. Likewise, KLB increases the affinity for FGF19 and FGF21. Interacts with PLCG1. Interacts with GRB2 and PAK4. Interacts with FLRT2. Autophosphorylated. Binding of FGF family members together with heparan sulfate proteoglycan or heparin promotes receptor dimerization and autophosphorylation on tyrosine residues. Autophosphorylation occurs in trans between the two FGFR molecules present in the dimer. In terms of processing, N-glycosylated in the endoplasmic reticulum. The N-glycan chains undergo further maturation to an Endo H-resistant form in the Golgi apparatus. Post-translationally, ubiquitinated. FGFR2 is rapidly ubiquitinated after autophosphorylation, leading to internalization and degradation. Subject to degradation both in lysosomes and by the proteasome.

It localises to the cell membrane. It is found in the golgi apparatus. Its subcellular location is the cytoplasmic vesicle. The enzyme catalyses L-tyrosyl-[protein] + ATP = O-phospho-L-tyrosyl-[protein] + ADP + H(+). Present in an inactive conformation in the absence of bound ligand. Ligand binding leads to dimerization and activation by autophosphorylation on tyrosine residues. Tyrosine-protein kinase that acts as a cell-surface receptor for fibroblast growth factors and plays an essential role in the regulation of cell proliferation, differentiation, migration and apoptosis, and in the regulation of embryonic development. Required for normal embryonic patterning, trophoblast function, limb bud development, lung morphogenesis, osteogenesis and skin development. Plays an essential role in the regulation of osteoblast differentiation, proliferation and apoptosis, and is required for normal skeleton development. Promotes cell proliferation in keratinocytes and immature osteoblasts, but promotes apoptosis in differentiated osteoblasts. Phosphorylates PLCG1, FRS2 and PAK4. Ligand binding leads to the activation of several signaling cascades. Activation of PLCG1 leads to the production of the cellular signaling molecules diacylglycerol and inositol 1,4,5-trisphosphate. Phosphorylation of FRS2 triggers recruitment of GRB2, GAB1, PIK3R1 and SOS1, and mediates activation of RAS, MAPK1/ERK2, MAPK3/ERK1 and the MAP kinase signaling pathway, as well as of the AKT1 signaling pathway. FGFR2 signaling is down-regulated by ubiquitination, internalization and degradation. Mutations that lead to constitutive kinase activation or impair normal FGFR2 maturation, internalization and degradation lead to aberrant signaling. Over-expressed FGFR2 promotes activation of STAT1. The polypeptide is Fibroblast growth factor receptor 2 (Fgfr2) (Mus musculus (Mouse)).